Here is a 903-residue protein sequence, read N- to C-terminus: Protein translocase subunit SecA (903 aa).

Residues glutamine 87, 105-109 (GEGKT), and aspartate 507 contribute to the ATP site. Residues 854–893 (STMADSSGDVKSSTAESKAPYVRDGRKVGRNEPCPCGSGK) are disordered. The span at 856-869 (MADSSGDVKSSTAE) shows a compositional bias: polar residues. Positions 874–883 (YVRDGRKVGR) are enriched in basic and acidic residues. Zn(2+)-binding residues include cysteine 887, cysteine 889, cysteine 898, and histidine 899.

This sequence belongs to the SecA family. As to quaternary structure, monomer and homodimer. Part of the essential Sec protein translocation apparatus which comprises SecA, SecYEG and auxiliary proteins SecDF-YajC and YidC. Zn(2+) serves as cofactor.

The protein localises to the cell inner membrane. It is found in the cytoplasm. The enzyme catalyses ATP + H2O + cellular proteinSide 1 = ADP + phosphate + cellular proteinSide 2.. Part of the Sec protein translocase complex. Interacts with the SecYEG preprotein conducting channel. Has a central role in coupling the hydrolysis of ATP to the transfer of proteins into and across the cell membrane, serving both as a receptor for the preprotein-SecB complex and as an ATP-driven molecular motor driving the stepwise translocation of polypeptide chains across the membrane. This chain is Protein translocase subunit SecA, found in Nitrosococcus oceani (strain ATCC 19707 / BCRC 17464 / JCM 30415 / NCIMB 11848 / C-107).